The chain runs to 340 residues: Ferredoxin--NADP reductase (340 aa).

Residues aspartate 33, glutamine 41, tyrosine 46, alanine 86, phenylalanine 120, aspartate 286, and threonine 327 each contribute to the FAD site.

The protein belongs to the ferredoxin--NADP reductase type 2 family. As to quaternary structure, homodimer. FAD is required as a cofactor.

The catalysed reaction is 2 reduced [2Fe-2S]-[ferredoxin] + NADP(+) + H(+) = 2 oxidized [2Fe-2S]-[ferredoxin] + NADPH. This is Ferredoxin--NADP reductase from Rickettsia conorii (strain ATCC VR-613 / Malish 7).